Consider the following 152-residue polypeptide: Deoxyuridine 5'-triphosphate nucleotidohydrolase (152 aa).

Residues 65-67 (RSG), asparagine 78, and 82-84 (TID) each bind substrate.

This sequence belongs to the dUTPase family. Mg(2+) serves as cofactor.

It carries out the reaction dUTP + H2O = dUMP + diphosphate + H(+). It participates in pyrimidine metabolism; dUMP biosynthesis; dUMP from dCTP (dUTP route): step 2/2. In terms of biological role, this enzyme is involved in nucleotide metabolism: it produces dUMP, the immediate precursor of thymidine nucleotides and it decreases the intracellular concentration of dUTP so that uracil cannot be incorporated into DNA. In Chlorobaculum tepidum (strain ATCC 49652 / DSM 12025 / NBRC 103806 / TLS) (Chlorobium tepidum), this protein is Deoxyuridine 5'-triphosphate nucleotidohydrolase.